A 301-amino-acid polypeptide reads, in one-letter code: Protein FdhE homolog (301 aa).

It belongs to the FdhE family.

The protein localises to the cytoplasm. In terms of biological role, necessary for formate dehydrogenase activity. The sequence is that of Protein FdhE homolog from Erwinia tasmaniensis (strain DSM 17950 / CFBP 7177 / CIP 109463 / NCPPB 4357 / Et1/99).